Here is a 150-residue protein sequence, read N- to C-terminus: Cytochrome b5 type B (150 aa).

Positions 1–15 are excised as a propeptide; that stretch reads MSGSMATAEASGSDG. A disordered region spans residues 1–20; sequence MSGSMATAEASGSDGKGQEV. S23 bears the Phosphoserine mark. The 77-residue stretch at 24–100 folds into the Cytochrome b5 heme-binding domain; that stretch reads VTYYRLEEVA…LKQYYIGDIH (77 aa). K34 carries the post-translational modification N6-acetyllysine. S37 bears the Phosphoserine mark. An N6-methyllysine modification is found at K39. Positions 59 and 83 each coordinate heme. S84 is subject to Phosphoserine. A helical transmembrane segment spans residues 123-140; that stretch reads WAYWILPIIGAVLLGFLY.

Belongs to the cytochrome b5 family. As to quaternary structure, component of a complex composed of cytochrome b5, NADH-cytochrome b5 reductase (CYB5R3) and MTARC2.

It is found in the mitochondrion outer membrane. Cytochrome b5 is a membrane-bound hemoprotein functioning as an electron carrier for several membrane-bound oxygenases. The chain is Cytochrome b5 type B (CYB5B) from Homo sapiens (Human).